Reading from the N-terminus, the 460-residue chain is tRNA modification GTPase MnmE (460 aa).

(6S)-5-formyl-5,6,7,8-tetrahydrofolate-binding residues include arginine 29, glutamate 91, and lysine 132. Positions 227 to 383 constitute a TrmE-type G domain; the sequence is GISIALIGKT…LIDTIIKKCG (157 aa). Residue asparagine 237 participates in K(+) binding. Residues 237 to 242, 256 to 262, and 281 to 284 each bind GTP; these read NVGKSS, TNIPGTT, and DTAG. A Mg(2+)-binding site is contributed by serine 241. Residues threonine 256, isoleucine 258, and threonine 261 each contribute to the K(+) site. Threonine 262 is a binding site for Mg(2+). A (6S)-5-formyl-5,6,7,8-tetrahydrofolate-binding site is contributed by lysine 460.

The protein belongs to the TRAFAC class TrmE-Era-EngA-EngB-Septin-like GTPase superfamily. TrmE GTPase family. As to quaternary structure, homodimer. Heterotetramer of two MnmE and two MnmG subunits. K(+) serves as cofactor.

The protein localises to the cytoplasm. In terms of biological role, exhibits a very high intrinsic GTPase hydrolysis rate. Involved in the addition of a carboxymethylaminomethyl (cmnm) group at the wobble position (U34) of certain tRNAs, forming tRNA-cmnm(5)s(2)U34. The chain is tRNA modification GTPase MnmE from Prochlorococcus marinus (strain MIT 9215).